The sequence spans 64 residues: Conotoxin Ts-011 (64 aa).

Residues 1-22 (MHCLPVPVILLLLIASTPSVDA) form the signal peptide. Positions 23–51 (RPKTKDDVPPASFHGADNANRILRTLWNL) are excised as a propeptide. Ile63 bears the Isoleucine amide mark.

The protein belongs to the conotoxin T superfamily. Contains 2 disulfide bonds that can be either 'C1-C3, C2-C4' or 'C1-C4, C2-C3', since these disulfide connectivities have been observed for conotoxins with cysteine framework V (for examples, see AC P0DQQ7 and AC P81755). As to expression, expressed by the venom duct.

The protein resides in the secreted. This chain is Conotoxin Ts-011, found in Conus tessulatus (Tessellate cone).